The primary structure comprises 211 residues: Testis-expressed protein 35 (211 aa).

A coiled-coil region spans residues 47–111; that stretch reads GGTKELKNEL…MDVLINIQKN (65 aa).

This is Testis-expressed protein 35 (Tex35) from Bos taurus (Bovine).